A 327-amino-acid chain; its full sequence is Phenylalanine--tRNA ligase alpha subunit (327 aa).

Residue Glu252 coordinates Mg(2+).

It belongs to the class-II aminoacyl-tRNA synthetase family. Phe-tRNA synthetase alpha subunit type 1 subfamily. In terms of assembly, tetramer of two alpha and two beta subunits. Mg(2+) serves as cofactor.

The protein resides in the cytoplasm. It catalyses the reaction tRNA(Phe) + L-phenylalanine + ATP = L-phenylalanyl-tRNA(Phe) + AMP + diphosphate + H(+). This is Phenylalanine--tRNA ligase alpha subunit from Photorhabdus laumondii subsp. laumondii (strain DSM 15139 / CIP 105565 / TT01) (Photorhabdus luminescens subsp. laumondii).